We begin with the raw amino-acid sequence, 394 residues long: ATP phosphoribosyltransferase regulatory subunit (394 aa).

Belongs to the class-II aminoacyl-tRNA synthetase family. HisZ subfamily. As to quaternary structure, heteromultimer composed of HisG and HisZ subunits.

It is found in the cytoplasm. Its pathway is amino-acid biosynthesis; L-histidine biosynthesis; L-histidine from 5-phospho-alpha-D-ribose 1-diphosphate: step 1/9. Functionally, required for the first step of histidine biosynthesis. May allow the feedback regulation of ATP phosphoribosyltransferase activity by histidine. The chain is ATP phosphoribosyltransferase regulatory subunit from Teredinibacter turnerae (strain ATCC 39867 / T7901).